A 406-amino-acid polypeptide reads, in one-letter code: Cysteine desulfurase IscS (406 aa).

Pyridoxal 5'-phosphate contacts are provided by residues 75 to 76 (AT), Asn-155, Gln-183, and 203 to 205 (SSH). Lys-206 carries the post-translational modification N6-(pyridoxal phosphate)lysine. Thr-243 serves as a coordination point for pyridoxal 5'-phosphate. The Cysteine persulfide intermediate role is filled by Cys-330. Residue Cys-330 participates in [2Fe-2S] cluster binding.

It belongs to the class-V pyridoxal-phosphate-dependent aminotransferase family. NifS/IscS subfamily. In terms of assembly, homodimer. Forms a heterotetramer with IscU, interacts with other sulfur acceptors. Pyridoxal 5'-phosphate serves as cofactor.

It is found in the cytoplasm. It carries out the reaction (sulfur carrier)-H + L-cysteine = (sulfur carrier)-SH + L-alanine. It functions in the pathway cofactor biosynthesis; iron-sulfur cluster biosynthesis. Its function is as follows. Master enzyme that delivers sulfur to a number of partners involved in Fe-S cluster assembly, tRNA modification or cofactor biosynthesis. Catalyzes the removal of elemental sulfur atoms from cysteine to produce alanine. Functions as a sulfur delivery protein for Fe-S cluster synthesis onto IscU, an Fe-S scaffold assembly protein, as well as other S acceptor proteins. The sequence is that of Cysteine desulfurase IscS from Haemophilus ducreyi (strain 35000HP / ATCC 700724).